A 375-amino-acid chain; its full sequence is Succinyl-diaminopimelate desuccinylase (375 aa).

H66 provides a ligand contact to Zn(2+). The active site involves D68. Position 99 (D99) interacts with Zn(2+). The Proton acceptor role is filled by E133. Residues E134, E162, and H348 each coordinate Zn(2+).

The protein belongs to the peptidase M20A family. DapE subfamily. Homodimer. The cofactor is Zn(2+). Co(2+) is required as a cofactor.

It catalyses the reaction N-succinyl-(2S,6S)-2,6-diaminopimelate + H2O = (2S,6S)-2,6-diaminopimelate + succinate. The protein operates within amino-acid biosynthesis; L-lysine biosynthesis via DAP pathway; LL-2,6-diaminopimelate from (S)-tetrahydrodipicolinate (succinylase route): step 3/3. Functionally, catalyzes the hydrolysis of N-succinyl-L,L-diaminopimelic acid (SDAP), forming succinate and LL-2,6-diaminopimelate (DAP), an intermediate involved in the bacterial biosynthesis of lysine and meso-diaminopimelic acid, an essential component of bacterial cell walls. This chain is Succinyl-diaminopimelate desuccinylase, found in Buchnera aphidicola subsp. Acyrthosiphon pisum (strain 5A).